The chain runs to 566 residues: Oxygen-dependent choline dehydrogenase (566 aa).

7 to 36 (DYIICGAGSAGNVLATRLTEDPNVTVLLLE) serves as a coordination point for FAD. Positions 185–204 (EGFGPMDRTVTPKGRRASTA) are disordered. His474 functions as the Proton acceptor in the catalytic mechanism.

This sequence belongs to the GMC oxidoreductase family. It depends on FAD as a cofactor.

It carries out the reaction choline + A = betaine aldehyde + AH2. The catalysed reaction is betaine aldehyde + NAD(+) + H2O = glycine betaine + NADH + 2 H(+). It participates in amine and polyamine biosynthesis; betaine biosynthesis via choline pathway; betaine aldehyde from choline (cytochrome c reductase route): step 1/1. Involved in the biosynthesis of the osmoprotectant glycine betaine. Catalyzes the oxidation of choline to betaine aldehyde and betaine aldehyde to glycine betaine at the same rate. This Burkholderia vietnamiensis (strain G4 / LMG 22486) (Burkholderia cepacia (strain R1808)) protein is Oxygen-dependent choline dehydrogenase.